The sequence spans 165 residues: Protein SprT (165 aa).

The 144-residue stretch at 20-163 folds into the SprT-like domain; the sequence is ENLAQANLKL…RCVHCGEPLV (144 aa). His-78 is a Zn(2+) binding site. Glu-79 is an active-site residue. His-82 provides a ligand contact to Zn(2+).

It belongs to the SprT family. Requires Zn(2+) as cofactor.

It localises to the cytoplasm. In Salmonella arizonae (strain ATCC BAA-731 / CDC346-86 / RSK2980), this protein is Protein SprT.